Consider the following 321-residue polypeptide: ATP phosphoribosyltransferase regulatory subunit (321 aa).

This sequence belongs to the class-II aminoacyl-tRNA synthetase family. HisZ subfamily. In terms of assembly, heteromultimer composed of HisG and HisZ subunits.

It localises to the cytoplasm. It functions in the pathway amino-acid biosynthesis; L-histidine biosynthesis; L-histidine from 5-phospho-alpha-D-ribose 1-diphosphate: step 1/9. Required for the first step of histidine biosynthesis. May allow the feedback regulation of ATP phosphoribosyltransferase activity by histidine. The polypeptide is ATP phosphoribosyltransferase regulatory subunit (Thiobacillus denitrificans (strain ATCC 25259 / T1)).